Consider the following 236-residue polypeptide: MTSRLFALIPCAGTGSRSGSALPKQYRTLAGRALLHYTLAAFDACSEFAQTLVVISPDDAHFDARRFAGLRFAVRRCGGASRQASVMNGLIQLAEFGATDADWVLVHDAARPGITPALIRTLIGALKDDPVGGIVALPVADTLKRVPAGGDAIERTESRNGLWQAQTPQMFRIGMLRDAIQRAQLEGRDLTDEASAIEWAGHTPRVVQGSLRNFKVTYPEDFDLAEAILAHPARAS.

It belongs to the IspD/TarI cytidylyltransferase family. IspD subfamily.

The catalysed reaction is 2-C-methyl-D-erythritol 4-phosphate + CTP + H(+) = 4-CDP-2-C-methyl-D-erythritol + diphosphate. Its pathway is isoprenoid biosynthesis; isopentenyl diphosphate biosynthesis via DXP pathway; isopentenyl diphosphate from 1-deoxy-D-xylulose 5-phosphate: step 2/6. Catalyzes the formation of 4-diphosphocytidyl-2-C-methyl-D-erythritol from CTP and 2-C-methyl-D-erythritol 4-phosphate (MEP). The protein is 2-C-methyl-D-erythritol 4-phosphate cytidylyltransferase of Burkholderia thailandensis (strain ATCC 700388 / DSM 13276 / CCUG 48851 / CIP 106301 / E264).